A 758-amino-acid chain; its full sequence is Spastin (758 aa).

Residues 1 to 99 (MVRTKNQSSS…PTTCSPRSGH (99 aa)) are disordered. The Cytoplasmic portion of the chain corresponds to 1 to 121 (MVRTKNQSSS…KQNLYVVSFP (121 aa)). Positions 1 to 210 (MVRTKNQSSS…RPIQPLEMAA (210 aa)) are required for localization to punctate cytoplasmic foci. Low complexity-rich tracts occupy residues 8 to 29 (SSSSSASSSSTKSPIKSSSATG), 43 to 58 (RSSSASNVAAVVAGGS), 66 to 76 (SSNRRSPGSSP), and 85 to 95 (TDDLTPTTCSP). The helical intramembrane region spans 122–142 (IIFLFNVLRSLIYQLFCIFRY). Over 143 to 758 (LYGASTKVIY…WSQDYGDITI (616 aa)) the chain is Cytoplasmic. 2 stretches are compositionally biased toward polar residues: residues 169-180 (SKEQQQSLNHPS) and 189-198 (QEQQLSNQPQ). The disordered stretch occupies residues 169-221 (SKEQQQSLNHPSELNRDSDGQEQQLSNQPQRFRPIQPLEMAANRPGGGYSPGP). Residues 208-758 (MAANRPGGGY…WSQDYGDITI (551 aa)) are sufficient for interaction with microtubules and microtubule severing. Positions 233 to 308 (HRRAFEYISK…SMARDRLHFL (76 aa)) constitute an MIT domain. Disordered stretches follow at residues 353–376 (RVRSSGYGPKATTGAQPTASGRKL) and 390–454 (NKSQ…ASTP). Composition is skewed to polar residues over residues 390–406 (NKSQTLPRNLGSKTSVG) and 425–454 (QFSSGRNTPPQRSRTPINNNGPSGSGASTP). The segment at 443–455 (NNGPSGSGASTPV) is required for interaction with microtubules. ATP is bound at residue 523-530 (GPPGNGKT).

This sequence belongs to the AAA ATPase family. Spastin subfamily. Homohexamer. The homohexamer is stabilized by ATP-binding. The homohexamer may adopt a ring conformation through which microtubules pass prior to being severed. Interacts with microtubules. Interacts with atl; may be involved in microtubule dynamics.

It is found in the membrane. It localises to the cytoplasm. The protein localises to the cytoskeleton. Its subcellular location is the microtubule organizing center. The protein resides in the centrosome. It is found in the chromosome. It localises to the lipid droplet. It carries out the reaction n ATP + n H2O + a microtubule = n ADP + n phosphate + (n+1) alpha/beta tubulin heterodimers.. In terms of biological role, ATP-dependent microtubule severing protein. Stimulates microtubule minus-end depolymerization and poleward microtubule flux in the mitotic spindle. Regulates microtubule stability in the neuromuscular junction synapse. Involved in lipid metabolism by regulating the size and distribution of lipid droplets. Involved in axon regeneration by regulating microtubule severing. The sequence is that of Spastin from Drosophila yakuba (Fruit fly).